The sequence spans 165 residues: GTP-dependent dephospho-CoA kinase (165 aa).

6 residues coordinate GTP: Asp44, Val45, Asp63, Lys65, Glu115, and Asp138.

The protein belongs to the GTP-dependent DPCK family.

It carries out the reaction 3'-dephospho-CoA + GTP = GDP + CoA + H(+). It functions in the pathway cofactor biosynthesis; coenzyme A biosynthesis. In terms of biological role, catalyzes the GTP-dependent phosphorylation of the 3'-hydroxyl group of dephosphocoenzyme A to form coenzyme A (CoA). The protein is GTP-dependent dephospho-CoA kinase of Picrophilus torridus (strain ATCC 700027 / DSM 9790 / JCM 10055 / NBRC 100828 / KAW 2/3).